The chain runs to 20 residues: Peptidase T (20 aa).

The protein belongs to the peptidase M20B family. Zn(2+) is required as a cofactor. Requires Co(2+) as cofactor.

The protein resides in the cell envelope. The enzyme catalyses Release of the N-terminal residue from a tripeptide.. Its activity is regulated as follows. Inhibited by the chelating agents EDTA and 1,10-phenanthroline, by bestatin and amastatin, p-hydroxymercuribenzoate and some divalent cations at high concentration. Its function is as follows. Cleaves a wide range of dipeptides and tripeptides, but does not display activity against larger peptides. May have a role in the survival of F.nucleatum in the subgingival environment of the mouth. The polypeptide is Peptidase T (pepT) (Fusobacterium nucleatum subsp. polymorphum (Fusobacterium polymorphum)).